The primary structure comprises 702 residues: Ribosomal RNA large subunit methyltransferase K/L (702 aa).

The THUMP domain occupies 43 to 154 (LIYQSLMWSR…KETASIALDL (112 aa)).

It belongs to the methyltransferase superfamily. RlmKL family.

It localises to the cytoplasm. It carries out the reaction guanosine(2445) in 23S rRNA + S-adenosyl-L-methionine = N(2)-methylguanosine(2445) in 23S rRNA + S-adenosyl-L-homocysteine + H(+). It catalyses the reaction guanosine(2069) in 23S rRNA + S-adenosyl-L-methionine = N(2)-methylguanosine(2069) in 23S rRNA + S-adenosyl-L-homocysteine + H(+). In terms of biological role, specifically methylates the guanine in position 2445 (m2G2445) and the guanine in position 2069 (m7G2069) of 23S rRNA. The polypeptide is Ribosomal RNA large subunit methyltransferase K/L (Salmonella schwarzengrund (strain CVM19633)).